The sequence spans 249 residues: Metallo-beta-lactamase type 2 (249 aa).

Positions 1 to 22 are cleaved as a signal peptide; it reads MLKKIKISLILALGLTSLQAFG. H98, H100, D102, H161, and C180 together coordinate Zn(2+). K183 is a binding site for substrate. H222 is a Zn(2+) binding site.

It belongs to the metallo-beta-lactamase superfamily. Class-B beta-lactamase family. Monomer. Requires Zn(2+) as cofactor.

Its subcellular location is the periplasm. The enzyme catalyses a beta-lactam + H2O = a substituted beta-amino acid. Its function is as follows. Confers resistance to the different beta-lactams antibiotics (penicillin, cephalosporin and carbapenem) via the hydrolysis of the beta-lactam ring. The protein is Metallo-beta-lactamase type 2 (blaB2) of Elizabethkingia meningoseptica (Chryseobacterium meningosepticum).